Here is a 266-residue protein sequence, read N- to C-terminus: Energy-coupling factor transporter transmembrane protein EcfT (266 aa).

Helical transmembrane passes span 32-52 (IIVV…AFTV), 71-91 (PLLW…PAGG), 107-127 (LINA…STLL), 152-172 (VPVD…PTLM), and 246-266 (DTVT…FRHW).

The protein belongs to the energy-coupling factor EcfT family. Forms a stable energy-coupling factor (ECF) transporter complex composed of 2 membrane-embedded substrate-binding proteins (S component), 2 ATP-binding proteins (A component) and 2 transmembrane proteins (T component). May be able to interact with more than 1 S component at a time.

It is found in the cell membrane. In terms of biological role, transmembrane (T) component of an energy-coupling factor (ECF) ABC-transporter complex. Unlike classic ABC transporters this ECF transporter provides the energy necessary to transport a number of different substrates. In Levilactobacillus brevis (strain ATCC 367 / BCRC 12310 / CIP 105137 / JCM 1170 / LMG 11437 / NCIMB 947 / NCTC 947) (Lactobacillus brevis), this protein is Energy-coupling factor transporter transmembrane protein EcfT.